Reading from the N-terminus, the 132-residue chain is Acyl carrier protein 3, chloroplastic (132 aa).

Residues 1–49 (MASIAGSAVSFAKPVKAINTNSLSFSGARRGNAFLRLQPVPMRFAVCCS) constitute a chloroplast transit peptide. The 76-residue stretch at 52 to 127 (QDTVEKVCEI…DAATLIDKLV (76 aa)) folds into the Carrier domain. At serine 87 the chain carries O-(pantetheine 4'-phosphoryl)serine.

Belongs to the acyl carrier protein (ACP) family. Post-translationally, 4'-phosphopantetheine is transferred from CoA to a specific serine of apo-ACP by acpS. This modification is essential for activity because fatty acids are bound in thioester linkage to the sulfhydryl of the prosthetic group.

The protein localises to the plastid. It localises to the chloroplast. Its pathway is lipid metabolism; fatty acid biosynthesis. Its function is as follows. Carrier of the growing fatty acid chain in fatty acid biosynthesis. The polypeptide is Acyl carrier protein 3, chloroplastic (ACL1.3) (Hordeum vulgare (Barley)).